The primary structure comprises 652 residues: Gametogenetin (652 aa).

Disordered regions lie at residues 1–39, 52–237, 251–273, 291–473, and 488–576; these read MGNL…MTSQ, PGSA…DSES, PSLA…GGGG, QGPL…GHKE, and LAAD…GAAN. Composition is skewed to basic and acidic residues over residues 18-30 and 124-133; these read QPSD…RRTS and RLLEASHRGQ. Residues 123–486 are interaction with GGNBP1; the sequence is RRLLEASHRG…APTAAPALPP (364 aa). Pro residues-rich tracts occupy residues 138-149 and 163-178; these read SLRPLKPPPPPR and QFPP…PPLP. The span at 201 to 212 shows a compositional bias: polar residues; it reads ESQAGPRNQGQT. Composition is skewed to low complexity over residues 213-230, 251-267, and 299-312; these read AGRA…GEMA, PSLA…AKAS, and ARPL…AQEA. The residue at position 389 (Ser-389) is a Phosphoserine. Positions 407–422 are enriched in low complexity; that stretch reads APALLAPPTFIFPAPT. Composition is skewed to pro residues over residues 428–466 and 495–513; these read RPGP…PPLT and APSP…PVSA. The tract at residues 491–652 is interactions with ZNF403/GGNBP2 and OAZ3; sequence DQAPAPSPAP…HYDLQATHSN (162 aa). Residues 523 to 532 are compositionally biased toward basic residues; the sequence is TRTRRNKGSR. The segment covering 538-552 has biased composition (basic and acidic residues); that stretch reads TRKDGLHGDGPRERA.

In terms of assembly, interacts with FANCL, GGNBP1 and ZNF403/GGNBP2.

Functionally, may be involved in spermatogenesis. The protein is Gametogenetin (GGN) of Homo sapiens (Human).